Here is a 420-residue protein sequence, read N- to C-terminus: Zinc finger protein 362 (420 aa).

Disordered stretches follow at residues 1–28 (MSRS…WPPP), 54–80 (RPPH…ESSQ), and 115–155 (VTGL…SQSR). Residues 121 to 154 (STRTPSVSTSESSAGAGTGTGTSTPSTPTTTSQS) are compositionally biased toward low complexity. Phosphothreonine is present on threonine 162. The disordered stretch occupies residues 178 to 202 (TIQGHGLLGPPKSERGRKKIKAENP). Lysine 198 participates in a covalent cross-link: Glycyl lysine isopeptide (Lys-Gly) (interchain with G-Cter in SUMO2). C2H2-type zinc fingers lie at residues 227 to 249 (YRCK…SKSH), 255 to 277 (HKCP…LRIH), 283 to 305 (YHCS…TRIH), 311 to 335 (YKCP…QRQH), 341 to 363 (YKCP…LSAH), and 371 to 393 (YCCS…MSKH). Serine 404 is modified (phosphoserine).

Belongs to the krueppel C2H2-type zinc-finger protein family.

It is found in the nucleus. May be involved in transcriptional regulation. This is Zinc finger protein 362 (ZNF362) from Homo sapiens (Human).